The chain runs to 245 residues: MRVGVLGAKGKVGATMVSAVESAADLTLSAEVDAGDPLSTLTETNTEAVIDFTHPDVVMGNLEFLIDNGIHAVVGTTGFTAERVEQVQSWLAKKPSTAVLIAPNFAIGAVLSMHFAKQAAPFFDSAEIIELHHPQKADAPSGTATRTAKLIAEAREGLAPNPDATSTSLPGARGADVDGIPVHAVRLAGLVAHQEVLFGTQGETLTIRHDSLDRTSFVPGVLLAVRRVRERPGLTIGIEPLLNLQ.

NAD(+) is bound by residues 7 to 12 (GAKGKV), 75 to 77 (GTT), and 102 to 105 (APNF). His132 serves as the catalytic Proton donor/acceptor. A (S)-2,3,4,5-tetrahydrodipicolinate-binding site is contributed by His133. The active-site Proton donor is the Lys136. A (S)-2,3,4,5-tetrahydrodipicolinate-binding site is contributed by 142–143 (GT).

Belongs to the DapB family.

The protein localises to the cytoplasm. The enzyme catalyses (S)-2,3,4,5-tetrahydrodipicolinate + NAD(+) + H2O = (2S,4S)-4-hydroxy-2,3,4,5-tetrahydrodipicolinate + NADH + H(+). It catalyses the reaction (S)-2,3,4,5-tetrahydrodipicolinate + NADP(+) + H2O = (2S,4S)-4-hydroxy-2,3,4,5-tetrahydrodipicolinate + NADPH + H(+). The protein operates within amino-acid biosynthesis; L-lysine biosynthesis via DAP pathway; (S)-tetrahydrodipicolinate from L-aspartate: step 4/4. Functionally, catalyzes the conversion of 4-hydroxy-tetrahydrodipicolinate (HTPA) to tetrahydrodipicolinate. This chain is 4-hydroxy-tetrahydrodipicolinate reductase, found in Mycobacterium marinum (strain ATCC BAA-535 / M).